Reading from the N-terminus, the 206-residue chain is Small ribosomal subunit protein uS4 (206 aa).

The segment at 27 to 47 (PSESKCNMNAAPGQHGGRRGR) is disordered. The S4 RNA-binding domain maps to 96–158 (QRLDNVVYRM…SRKQIRIQSA (63 aa)).

This sequence belongs to the universal ribosomal protein uS4 family. Part of the 30S ribosomal subunit. Contacts protein S5. The interaction surface between S4 and S5 is involved in control of translational fidelity.

Its function is as follows. One of the primary rRNA binding proteins, it binds directly to 16S rRNA where it nucleates assembly of the body of the 30S subunit. In terms of biological role, with S5 and S12 plays an important role in translational accuracy. The protein is Small ribosomal subunit protein uS4 of Dichelobacter nodosus (strain VCS1703A).